A 131-amino-acid polypeptide reads, in one-letter code: uncharacterized protein (131 aa).

The protein localises to the mitochondrion. This is an uncharacterized protein from Arabidopsis thaliana (Mouse-ear cress).